Reading from the N-terminus, the 412-residue chain is Putative membrane protein 337L (412 aa).

4 N-linked (GlcNAc...) asparagine; by host glycosylation sites follow: asparagine 171, asparagine 186, asparagine 247, and asparagine 271. A helical membrane pass occupies residues 387-407; the sequence is VLITGIAVTGVAVLLFLLLMF.

It belongs to the IIV-6 337L family.

It localises to the virion membrane. The protein is Putative membrane protein 337L of Acheta domesticus (House cricket).